The chain runs to 227 residues: HTH-type transcriptional regulator ArcR (227 aa).

41–130 contributes to the a nucleoside 3',5'-cyclic phosphate binding site; sequence VRRYNKGQII…LEYLCKNHDD (90 aa). One can recognise an HTH crp-type domain in the interval 156 to 227; it reads KLARERIEKV…KNGKNWMVIK (72 aa). A DNA-binding region (H-T-H motif) is located at residues 189-208; sequence IQLLSDLAGISRETTGHIVH.

It is found in the cytoplasm. Positively regulates the expression of the arcABDCR operon under anaerobic conditions, thus playing an essential role in arginine catabolism. May also control the expression of genes encoding proteins which are involved in anaerobic metabolism. Can bind cyclic AMP. This is HTH-type transcriptional regulator ArcR (arcR) from Staphylococcus haemolyticus (strain JCSC1435).